Consider the following 257-residue polypeptide: Putative hydro-lyase Bcenmc03_3969 (257 aa).

The protein belongs to the D-glutamate cyclase family.

The sequence is that of Putative hydro-lyase Bcenmc03_3969 from Burkholderia orbicola (strain MC0-3).